A 105-amino-acid chain; its full sequence is Large ribosomal subunit protein bL34m (105 aa).

A mitochondrion-targeting transit peptide spans 1–16 (MPLFARLCQPQSRRMF).

This sequence belongs to the bacterial ribosomal protein bL34 family. Component of the mitochondrial large ribosomal subunit (mt-LSU). Mature yeast 74S mitochondrial ribosomes consist of a small (37S) and a large (54S) subunit. The 37S small subunit contains a 15S ribosomal RNA (15S mt-rRNA) and 34 different proteins. The 54S large subunit contains a 21S rRNA (21S mt-rRNA) and 46 different proteins.

Its subcellular location is the mitochondrion. Component of the mitochondrial ribosome (mitoribosome), a dedicated translation machinery responsible for the synthesis of mitochondrial genome-encoded proteins, including at least some of the essential transmembrane subunits of the mitochondrial respiratory chain. The mitoribosomes are attached to the mitochondrial inner membrane and translation products are cotranslationally integrated into the membrane. The chain is Large ribosomal subunit protein bL34m from Saccharomyces cerevisiae (strain ATCC 204508 / S288c) (Baker's yeast).